The chain runs to 316 residues: Ribosomal RNA small subunit methyltransferase H (316 aa).

S-adenosyl-L-methionine is bound by residues 35-37, Asp-55, Phe-79, Asp-101, and Gln-108; that span reads GGH.

The protein belongs to the methyltransferase superfamily. RsmH family.

It is found in the cytoplasm. It carries out the reaction cytidine(1402) in 16S rRNA + S-adenosyl-L-methionine = N(4)-methylcytidine(1402) in 16S rRNA + S-adenosyl-L-homocysteine + H(+). Specifically methylates the N4 position of cytidine in position 1402 (C1402) of 16S rRNA. In Aliivibrio fischeri (strain MJ11) (Vibrio fischeri), this protein is Ribosomal RNA small subunit methyltransferase H.